Here is a 391-residue protein sequence, read N- to C-terminus: Transaldolase (391 aa).

Residue Lys134 is the Schiff-base intermediate with substrate of the active site. EF-hand domains lie at 329–364 and 365–387; these read TLTH…FDAL and DANH…VLHL. The Ca(2+) site is built by Asp342, Asp344, Asp346, Glu353, Asp365, Asn367, Asp369, Lys371, and Asp376.

This sequence belongs to the transaldolase family. Type 1 subfamily.

The protein localises to the cytoplasm. The catalysed reaction is D-sedoheptulose 7-phosphate + D-glyceraldehyde 3-phosphate = D-erythrose 4-phosphate + beta-D-fructose 6-phosphate. Its pathway is carbohydrate degradation; pentose phosphate pathway; D-glyceraldehyde 3-phosphate and beta-D-fructose 6-phosphate from D-ribose 5-phosphate and D-xylulose 5-phosphate (non-oxidative stage): step 2/3. Transaldolase is important for the balance of metabolites in the pentose-phosphate pathway. This chain is Transaldolase, found in Thermosynechococcus vestitus (strain NIES-2133 / IAM M-273 / BP-1).